A 55-amino-acid polypeptide reads, in one-letter code: Large ribosomal subunit protein bL33 (55 aa).

Belongs to the bacterial ribosomal protein bL33 family.

The sequence is that of Large ribosomal subunit protein bL33 from Maricaulis maris (strain MCS10) (Caulobacter maris).